The sequence spans 388 residues: Na(+)/H(+) antiporter NhaA (388 aa).

Topologically, residues 1–11 are cytoplasmic; it reads MKHLHRFFSSD. The helical transmembrane segment at 12-31 threads the bilayer; it reads ASGGIILIIAAILAMMMANS. Topologically, residues 32-58 are periplasmic; that stretch reads GATSGWYHDFLETPVQLRVGSLEINKN. Residues 59-80 form a helical membrane-spanning segment; it reads MLLWINDALMAVFFLLVGLEVK. Over 81–96 the chain is Cytoplasmic; that stretch reads RELMQGSLASLRQAAF. A helical membrane pass occupies residues 97–116; it reads PVIAAIGGMIVPALLYLAFN. Topologically, residues 117–122 are periplasmic; the sequence is YADPIT. The helical transmembrane segment at 123 to 130 threads the bilayer; sequence REGWAIPA. The Cytoplasmic portion of the chain corresponds to 131–154; sequence ATDIAFALGVLALLGSRVPLALKI. The helical transmembrane segment at 155–176 threads the bilayer; sequence FLMALAIIDDLGAIIIIALFYT. The Periplasmic segment spans residues 177–180; that stretch reads NDLS. The chain crosses the membrane as a helical span at residues 181-200; sequence MASLGVAAVAIAVLAVLNLC. Residues 201–204 lie on the Cytoplasmic side of the membrane; that stretch reads GVRR. Residues 205–222 form a helical membrane-spanning segment; sequence TGVYILVGVVLWTAVLKS. A topological domain (periplasmic) is located at residue Gly-223. The helical transmembrane segment at 224-236 threads the bilayer; it reads VHATLAGVIVGFF. The Cytoplasmic portion of the chain corresponds to 237–253; that stretch reads IPLKEKHGRSPAKRLEH. Residues 254–272 form a helical membrane-spanning segment; the sequence is VLHPWVAYLILPLFAFANA. Over 273–286 the chain is Periplasmic; sequence GVSLQGVTLDGLTS. Residues 287 to 310 form a helical membrane-spanning segment; it reads ILPLGIIAGLLIGKPLGISLFCWL. The Cytoplasmic portion of the chain corresponds to 311–339; the sequence is ALRLKLAHLPEGTTYQQIMAVGILCGIGF. A helical transmembrane segment spans residues 340-350; it reads TMSIFIASLAF. Residues 351–357 lie on the Periplasmic side of the membrane; that stretch reads GSVDPEL. The chain crosses the membrane as a helical span at residues 358–380; the sequence is INWAKLGILVGSISSAVIGYSWL. At 381–388 the chain is on the cytoplasmic side; the sequence is RVRLRPSV.

This sequence belongs to the NhaA Na(+)/H(+) (TC 2.A.33) antiporter family.

It is found in the cell inner membrane. It catalyses the reaction Na(+)(in) + 2 H(+)(out) = Na(+)(out) + 2 H(+)(in). Na(+)/H(+) antiporter that extrudes sodium in exchange for external protons. In Shigella boydii serotype 4 (strain Sb227), this protein is Na(+)/H(+) antiporter NhaA.